The following is a 290-amino-acid chain: Succinate dehydrogenase [ubiquinone] iron-sulfur subunit, mitochondrial (290 aa).

The transit peptide at 1–38 (MAAAVVGVSLRRGVPARFLRAGLRPVRGLEAVHGICRG) directs the protein to the mitochondrion. A 2Fe-2S ferredoxin-type domain is found at 50–143 (KKFSIYRWDP…TTKIYPLPHM (94 aa)). Positions 103, 108, 111, and 123 each coordinate [2Fe-2S] cluster. Positions 186 to 216 (DRQKLDGLYECILCACCSTSCPSYWWNGDKY) constitute a 4Fe-4S ferredoxin-type domain. Residues Cys-196, Cys-199, and Cys-202 each coordinate [4Fe-4S] cluster. Position 206 (Cys-206) interacts with [3Fe-4S] cluster. Residue Trp-211 coordinates a ubiquinone. The [3Fe-4S] cluster site is built by Cys-253 and Cys-259. Cys-263 provides a ligand contact to [4Fe-4S] cluster.

This sequence belongs to the succinate dehydrogenase/fumarate reductase iron-sulfur protein family. Component of complex II composed of four subunits: the flavoprotein (FP) SDHA, iron-sulfur protein (IP) SDHB, and a cytochrome b560 composed of SDHC and SDHD. It depends on [2Fe-2S] cluster as a cofactor. Requires [3Fe-4S] cluster as cofactor. [4Fe-4S] cluster serves as cofactor.

It is found in the mitochondrion inner membrane. It carries out the reaction a quinone + succinate = fumarate + a quinol. The enzyme catalyses (R)-malate + a quinone = enol-oxaloacetate + a quinol. It catalyses the reaction (S)-malate + a quinone = enol-oxaloacetate + a quinol. Its pathway is carbohydrate metabolism; tricarboxylic acid cycle; fumarate from succinate (eukaryal route): step 1/1. Enol-oxaloacetate inhibits the succinate dehydrogenase activity. Iron-sulfur protein (IP) subunit of the succinate dehydrogenase complex (mitochondrial respiratory chain complex II), responsible for transferring electrons from succinate to ubiquinone (coenzyme Q). SDH also oxidizes malate to the non-canonical enol form of oxaloacetate, enol-oxaloacetate. Enol-oxaloacetate, which is a potent inhibitor of the succinate dehydrogenase activity, is further isomerized into keto-oxaloacetate. This is Succinate dehydrogenase [ubiquinone] iron-sulfur subunit, mitochondrial (SDHB) from Gallus gallus (Chicken).